An 890-amino-acid polypeptide reads, in one-letter code: DNA mismatch repair protein MutS (890 aa).

607-614 (GPNMSGKS) contacts ATP. The tract at residues 832–851 (ESQLSFFGGEQSSKKQDKPL) is disordered.

Belongs to the DNA mismatch repair MutS family.

Functionally, this protein is involved in the repair of mismatches in DNA. It is possible that it carries out the mismatch recognition step. This protein has a weak ATPase activity. The sequence is that of DNA mismatch repair protein MutS from Bacillus cereus (strain B4264).